A 278-amino-acid chain; its full sequence is GTPase Era (278 aa).

An Era-type G domain is found at 7–168; that stretch reads YCGYIAIVGK…ENLIYPYLPN (162 aa). Positions 15-22 are G1; that stretch reads GKPNVGKS. A GTP-binding site is contributed by 15–22; the sequence is GKPNVGKS. The segment at 41–45 is G2; it reads NTTQK. Positions 62–65 are G3; sequence DTPG. GTP contacts are provided by residues 62 to 66 and 117 to 120; these read DTPGI and NKID. Residues 117-120 form a G4 region; that stretch reads NKID. Residues 147-149 form a G5 region; that stretch reads ISA. Positions 199–276 constitute a KH type-2 domain; sequence LRDELPSIIT…YLIIWVKVKI (78 aa).

This sequence belongs to the TRAFAC class TrmE-Era-EngA-EngB-Septin-like GTPase superfamily. Era GTPase family. Monomer.

The protein resides in the cytoplasm. The protein localises to the cell membrane. Functionally, an essential GTPase that binds both GDP and GTP, with rapid nucleotide exchange. Plays a role in 16S rRNA processing and 30S ribosomal subunit biogenesis and possibly also in cell cycle regulation and energy metabolism. The chain is GTPase Era from Buchnera aphidicola subsp. Schizaphis graminum (strain Sg).